Reading from the N-terminus, the 599-residue chain is Proline--tRNA ligase (599 aa).

Belongs to the class-II aminoacyl-tRNA synthetase family. ProS type 1 subfamily. As to quaternary structure, homodimer.

It is found in the cytoplasm. The enzyme catalyses tRNA(Pro) + L-proline + ATP = L-prolyl-tRNA(Pro) + AMP + diphosphate. Catalyzes the attachment of proline to tRNA(Pro) in a two-step reaction: proline is first activated by ATP to form Pro-AMP and then transferred to the acceptor end of tRNA(Pro). As ProRS can inadvertently accommodate and process non-cognate amino acids such as alanine and cysteine, to avoid such errors it has two additional distinct editing activities against alanine. One activity is designated as 'pretransfer' editing and involves the tRNA(Pro)-independent hydrolysis of activated Ala-AMP. The other activity is designated 'posttransfer' editing and involves deacylation of mischarged Ala-tRNA(Pro). The misacylated Cys-tRNA(Pro) is not edited by ProRS. This Prochlorococcus marinus (strain MIT 9303) protein is Proline--tRNA ligase.